The sequence spans 76 residues: Dermaseptin-H1 (76 aa).

The signal sequence occupies residues 1-22; sequence MDILKKSLFIVLFLGLVSLSIC. The propeptide occupies 23–45; it reads EEEKRENEDEEEQEDDEQSEEKR. A disordered region spans residues 25 to 44; the sequence is EKRENEDEEEQEDDEQSEEK. Residues 30–41 are compositionally biased toward acidic residues; sequence EDEEEQEDDEQS. Glutamine amide is present on glutamine 73. The propeptide occupies 75-76; it reads EQ.

Expressed by the skin glands.

Its subcellular location is the secreted. Has antimicrobial activity. The chain is Dermaseptin-H1 from Pithecopus hypochondrialis (Orange-legged leaf frog).